Reading from the N-terminus, the 303-residue chain is MNPQELKSILSSGLLSFPVTDFDAAGDFHQAGYVRRLEWLAPYGASALFAAGGTGEFFSLAPDEYSAVIKTAVDTCEKSVPILAGVGGPTRVAIQMAQEAERLGAKGLLLLPHYLTEASQEGVAAHVEQVCKAVKIGVVIYNRNVCRLNANLLEQLAERCPNLIGYKDGLGDIELMVSIRRRLGERLTYLGGLPTAEVYAAAYKALGVPVYSSAVFNFIPKTAMAFYKAIAADDQATVGKLIDDFFLPYLDIRNRRAGYAVSIVKAGAKIVGYDAGPVRAPLTDLLPEEYEALAKLIEAQGAQ.

Belongs to the DapA family.

It catalyses the reaction 5-dehydro-4-deoxy-D-glucarate + H(+) = 2,5-dioxopentanoate + CO2 + H2O. It participates in carbohydrate acid metabolism; D-glucarate degradation; 2,5-dioxopentanoate from D-glucarate: step 2/2. This Ectopseudomonas mendocina (strain ymp) (Pseudomonas mendocina) protein is Probable 5-dehydro-4-deoxyglucarate dehydratase.